Here is a 493-residue protein sequence, read N- to C-terminus: Cysteine--tRNA ligase (493 aa).

A Zn(2+)-binding site is contributed by C31. Residues 33–43 (PTVYGDAHLGH) carry the 'HIGH' region motif. Positions 226, 251, and 255 each coordinate Zn(2+). The 'KMSKS' region signature appears at 283-287 (KMGKS). Residue K286 coordinates ATP.

It belongs to the class-I aminoacyl-tRNA synthetase family. As to quaternary structure, monomer. The cofactor is Zn(2+).

The protein localises to the cytoplasm. The enzyme catalyses tRNA(Cys) + L-cysteine + ATP = L-cysteinyl-tRNA(Cys) + AMP + diphosphate. This Phocaeicola vulgatus (strain ATCC 8482 / DSM 1447 / JCM 5826 / CCUG 4940 / NBRC 14291 / NCTC 11154) (Bacteroides vulgatus) protein is Cysteine--tRNA ligase.